Consider the following 361-residue polypeptide: tRNA/tmRNA (uracil-C(5))-methyltransferase (361 aa).

S-adenosyl-L-methionine-binding residues include Gln-185, Tyr-213, Asn-218, Glu-234, and Asp-294. Cys-319 (nucleophile) is an active-site residue. The active-site Proton acceptor is Glu-353.

The protein belongs to the class I-like SAM-binding methyltransferase superfamily. RNA M5U methyltransferase family. TrmA subfamily.

It carries out the reaction uridine(54) in tRNA + S-adenosyl-L-methionine = 5-methyluridine(54) in tRNA + S-adenosyl-L-homocysteine + H(+). The catalysed reaction is uridine(341) in tmRNA + S-adenosyl-L-methionine = 5-methyluridine(341) in tmRNA + S-adenosyl-L-homocysteine + H(+). Its function is as follows. Dual-specificity methyltransferase that catalyzes the formation of 5-methyluridine at position 54 (m5U54) in all tRNAs, and that of position 341 (m5U341) in tmRNA (transfer-mRNA). This is tRNA/tmRNA (uracil-C(5))-methyltransferase from Pseudomonas savastanoi pv. phaseolicola (strain 1448A / Race 6) (Pseudomonas syringae pv. phaseolicola (strain 1448A / Race 6)).